Consider the following 378-residue polypeptide: ATP phosphoribosyltransferase regulatory subunit (378 aa).

This sequence belongs to the class-II aminoacyl-tRNA synthetase family. HisZ subfamily. As to quaternary structure, heteromultimer composed of HisG and HisZ subunits.

Its subcellular location is the cytoplasm. The protein operates within amino-acid biosynthesis; L-histidine biosynthesis; L-histidine from 5-phospho-alpha-D-ribose 1-diphosphate: step 1/9. Required for the first step of histidine biosynthesis. May allow the feedback regulation of ATP phosphoribosyltransferase activity by histidine. The sequence is that of ATP phosphoribosyltransferase regulatory subunit from Brucella abortus (strain 2308).